The primary structure comprises 271 residues: Calretinin (271 aa).

6 consecutive EF-hand domains span residues 16–51 (LTAS…LEKA), 63–98 (NFGE…EENF), 107–142 (GSSA…LLKK), 151–186 (KLQE…QENF), 195–230 (LTSE…LYEK), and 235–270 (MNIQ…SEPP). The Ca(2+) site is built by Asp29, Asp31, Asn33, Tyr35, Glu40, Asp76, Asn78, Asp80, Lys82, Glu87, Asp120, Asp122, Ser124, Tyr126, Glu131, Asp164, Asn166, Asp168, Lys170, Glu175, Asp208, Asp210, Ser212, Tyr214, and Glu219. The residue at position 214 (Tyr214) is a Phosphotyrosine.

This sequence belongs to the calbindin family. Widely expressed in central nervous system. Expressed in type I unipolar brush cells of the cerebellum (at protein level).

The protein resides in the synapse. It is found in the cell projection. It localises to the dendrite. Functionally, calcium-binding protein involved in calcium homeostasis and signal transduction. It plays a critical role in buffering intracellular calcium levels and modulating calcium-dependent signaling pathways. Predominantly expressed in specific neuronal populations, influences synaptic plasticity and neuronal excitability, contributing to learning and memory. During embryonic development, it facilitates neuronal differentiation and maturation. The polypeptide is Calretinin (Calb2) (Mus musculus (Mouse)).